A 148-amino-acid polypeptide reads, in one-letter code: Urease accessory protein UreE (148 aa).

Belongs to the UreE family.

It localises to the cytoplasm. Involved in urease metallocenter assembly. Binds nickel. Probably functions as a nickel donor during metallocenter assembly. The chain is Urease accessory protein UreE from Lysinibacillus sphaericus (strain C3-41).